Here is a 79-residue protein sequence, read N- to C-terminus: ATP synthase subunit c (79 aa).

Helical transmembrane passes span 10–30 (IAGA…IGVL) and 52–72 (FFIV…LAMY).

The protein belongs to the ATPase C chain family. As to quaternary structure, F-type ATPases have 2 components, F(1) - the catalytic core - and F(0) - the membrane proton channel. F(1) has five subunits: alpha(3), beta(3), gamma(1), delta(1), epsilon(1). F(0) has three main subunits: a(1), b(2) and c(10-14). The alpha and beta chains form an alternating ring which encloses part of the gamma chain. F(1) is attached to F(0) by a central stalk formed by the gamma and epsilon chains, while a peripheral stalk is formed by the delta and b chains.

It localises to the cell inner membrane. F(1)F(0) ATP synthase produces ATP from ADP in the presence of a proton or sodium gradient. F-type ATPases consist of two structural domains, F(1) containing the extramembraneous catalytic core and F(0) containing the membrane proton channel, linked together by a central stalk and a peripheral stalk. During catalysis, ATP synthesis in the catalytic domain of F(1) is coupled via a rotary mechanism of the central stalk subunits to proton translocation. In terms of biological role, key component of the F(0) channel; it plays a direct role in translocation across the membrane. A homomeric c-ring of between 10-14 subunits forms the central stalk rotor element with the F(1) delta and epsilon subunits. The chain is ATP synthase subunit c from Thiobacillus denitrificans (strain ATCC 25259 / T1).